Reading from the N-terminus, the 375-residue chain is Queuine tRNA-ribosyltransferase (375 aa).

The active-site Proton acceptor is the aspartate 90. Residues 90 to 94, aspartate 144, glutamine 190, and glycine 217 contribute to the substrate site; that span reads DSGGF. The tract at residues 248–254 is RNA binding; sequence GIGTPHY. Aspartate 267 functions as the Nucleophile in the catalytic mechanism. The RNA binding; important for wobble base 34 recognition stretch occupies residues 272–276; that stretch reads ARITR. Residues cysteine 305, cysteine 307, cysteine 310, and histidine 336 each contribute to the Zn(2+) site.

It belongs to the queuine tRNA-ribosyltransferase family. As to quaternary structure, homodimer. Within each dimer, one monomer is responsible for RNA recognition and catalysis, while the other monomer binds to the replacement base PreQ1. Zn(2+) serves as cofactor.

It carries out the reaction 7-aminomethyl-7-carbaguanine + guanosine(34) in tRNA = 7-aminomethyl-7-carbaguanosine(34) in tRNA + guanine. It functions in the pathway tRNA modification; tRNA-queuosine biosynthesis. Its function is as follows. Catalyzes the base-exchange of a guanine (G) residue with the queuine precursor 7-aminomethyl-7-deazaguanine (PreQ1) at position 34 (anticodon wobble position) in tRNAs with GU(N) anticodons (tRNA-Asp, -Asn, -His and -Tyr). Catalysis occurs through a double-displacement mechanism. The nucleophile active site attacks the C1' of nucleotide 34 to detach the guanine base from the RNA, forming a covalent enzyme-RNA intermediate. The proton acceptor active site deprotonates the incoming PreQ1, allowing a nucleophilic attack on the C1' of the ribose to form the product. After dissociation, two additional enzymatic reactions on the tRNA convert PreQ1 to queuine (Q), resulting in the hypermodified nucleoside queuosine (7-(((4,5-cis-dihydroxy-2-cyclopenten-1-yl)amino)methyl)-7-deazaguanosine). The protein is Queuine tRNA-ribosyltransferase of Borreliella burgdorferi (strain ATCC 35210 / DSM 4680 / CIP 102532 / B31) (Borrelia burgdorferi).